Here is a 282-residue protein sequence, read N- to C-terminus: E3 ubiquitin-protein ligase RNF217 (282 aa).

The TRIAD supradomain stretch occupies residues 1–218; it reads MSCRVCLEDR…LSIFGCKYRY (218 aa). Positions 3, 6, 23, 26, 123, 126, 131, 136, 163, and 166 each coordinate Zn(2+). The RING-type 1 zinc-finger motif lies at 3 to 49; that stretch reads CRVCLEDRSIKPLPCCKKPVCDECLKRYLSSQVQLGQAEIQCPITEC. The segment at 68–136 adopts an IBR-type zinc-finger fold; the sequence is IKYKYFLELS…HAPWHEGVNC (69 aa). The segment at 163-192 adopts an RING-type 2; atypical zinc-finger fold; sequence CPRCKVHIQRTEGCDHMTCSQCNTNFCYRC. The active site involves cysteine 176. Zn(2+) contacts are provided by cysteine 181, cysteine 184, cysteine 189, cysteine 192, histidine 205, and cysteine 214. Residues 243-263 form a helical membrane-spanning segment; that stretch reads LLIVLGLVLGALAVVIGLFGL.

Belongs to the RBR family. RNF217 subfamily.

It is found in the cytoplasm. The protein localises to the membrane. The catalysed reaction is [E2 ubiquitin-conjugating enzyme]-S-ubiquitinyl-L-cysteine + [acceptor protein]-L-lysine = [E2 ubiquitin-conjugating enzyme]-L-cysteine + [acceptor protein]-N(6)-ubiquitinyl-L-lysine.. Its pathway is protein modification; protein ubiquitination. Functionally, E3 ubiquitin-protein ligase which accepts ubiquitin from E2 ubiquitin-conjugating enzymes in the form of a thioester and then directly transfers the ubiquitin to targeted substrates. Mediates the degradation of the iron exporter ferroportin/SLC40A1 and thus regulates iron homeostasis. This Xenopus laevis (African clawed frog) protein is E3 ubiquitin-protein ligase RNF217 (rnf217).